We begin with the raw amino-acid sequence, 334 residues long: Protein-methionine-sulfoxide reductase catalytic subunit MsrP (334 aa).

The tat-type signal signal peptide spans 1-44 (MKKNQFLKESDVTAESVFFMKRRQVLKALGISAAALSLPHAAHA). Mo-molybdopterin-binding positions include N88, 91–92 (YE), C146, T181, N233, R238, and 249–251 (GIK).

Belongs to the MsrP family. Heterodimer of a catalytic subunit (MsrP) and a heme-binding subunit (MsrQ). Mo-molybdopterin is required as a cofactor. Post-translationally, predicted to be exported by the Tat system. The position of the signal peptide cleavage has not been experimentally proven.

It localises to the periplasm. The catalysed reaction is L-methionyl-[protein] + a quinone + H2O = L-methionyl-(S)-S-oxide-[protein] + a quinol. It carries out the reaction L-methionyl-[protein] + a quinone + H2O = L-methionyl-(R)-S-oxide-[protein] + a quinol. Part of the MsrPQ system that repairs oxidized periplasmic proteins containing methionine sulfoxide residues (Met-O), using respiratory chain electrons. Thus protects these proteins from oxidative-stress damage caused by reactive species of oxygen and chlorine generated by the host defense mechanisms. MsrPQ is essential for the maintenance of envelope integrity under bleach stress, rescuing a wide series of structurally unrelated periplasmic proteins from methionine oxidation, including the primary periplasmic chaperone SurA and the lipoprotein Pal. The catalytic subunit MsrP is non-stereospecific, being able to reduce both (R-) and (S-) diastereoisomers of methionine sulfoxide. The chain is Protein-methionine-sulfoxide reductase catalytic subunit MsrP from Escherichia coli (strain UTI89 / UPEC).